Consider the following 524-residue polypeptide: Mitochondrial-processing peptidase subunit alpha (524 aa).

The transit peptide at 1–32 (MATAVWAAARLLRGSAALCARPKFGSPAHRRF) directs the protein to the mitochondrion. Lysine 63 carries the N6-succinyllysine modification.

The protein belongs to the peptidase M16 family. In terms of assembly, heterodimer of PMPCA (alpha) and PMPCB (beta) subunits, forming the mitochondrial processing protease (MPP) in which PMPCA is involved in substrate recognition and binding and PMPCB is the catalytic subunit.

The protein resides in the mitochondrion matrix. It localises to the mitochondrion inner membrane. Functionally, substrate recognition and binding subunit of the essential mitochondrial processing protease (MPP), which cleaves the mitochondrial sequence off newly imported precursors proteins. In Rattus norvegicus (Rat), this protein is Mitochondrial-processing peptidase subunit alpha (Pmpca).